The primary structure comprises 33 residues: Alpha-amanitin proprotein (33 aa).

Positions methionine 1 to proline 10 are excised as a propeptide. Position 11 is a (3R,4R)-4,5-dihydroxyisoleucine; in form alpha-amanitin (isoleucine 11). Position 11 is a (3R,4S)-4-hydroxyisoleucine; in form gamma-amanitin (isoleucine 11). The cyclopeptide (Ile-Pro) cross-link spans isoleucine 11–proline 18. Residues tryptophan 12–cysteine 16 constitute a cross-link (2'-cysteinyl-6'-hydroxytryptophan sulfoxide (Trp-Cys)). Residue proline 18 is modified to 4-hydroxyproline. Positions cysteine 19–alanine 33 are excised as a propeptide.

It belongs to the MSDIN fungal toxin family. Post-translationally, processed by the macrocyclase-peptidase enzyme POPB to yield a toxic cyclic decapeptide. POPB first removes 10 residues from the N-terminus. Conformational trapping of the remaining peptide forces the enzyme to release this intermediate rather than proceed to macrocyclization. The enzyme rebinds the remaining peptide in a different conformation and catalyzes macrocyclization of the N-terminal 8 residues.

Major toxin belonging to the bicyclic octapeptides amatoxins that acts by binding non-competitively to RNA polymerase II and greatly slowing the elongation of transcripts from target promoters. The sequence is that of Alpha-amanitin proprotein from Amanita fuligineoides.